A 368-amino-acid polypeptide reads, in one-letter code: Histidinol-phosphate aminotransferase (368 aa).

Lys-228 carries the N6-(pyridoxal phosphate)lysine modification.

It belongs to the class-II pyridoxal-phosphate-dependent aminotransferase family. Histidinol-phosphate aminotransferase subfamily. As to quaternary structure, homodimer. Requires pyridoxal 5'-phosphate as cofactor.

The enzyme catalyses L-histidinol phosphate + 2-oxoglutarate = 3-(imidazol-4-yl)-2-oxopropyl phosphate + L-glutamate. Its pathway is amino-acid biosynthesis; L-histidine biosynthesis; L-histidine from 5-phospho-alpha-D-ribose 1-diphosphate: step 7/9. The polypeptide is Histidinol-phosphate aminotransferase (hisC) (Methylobacillus flagellatus).